Here is a 247-residue protein sequence, read N- to C-terminus: 2,3-bisphosphoglycerate-dependent phosphoglycerate mutase (247 aa).

Substrate contacts are provided by residues 8–15 (RHGESQWN), 21–22 (TG), Arg60, 87–90 (ERHY), Lys98, 114–115 (RR), and 183–184 (GN). The Tele-phosphohistidine intermediate role is filled by His9. Residue Glu87 is the Proton donor/acceptor of the active site.

Belongs to the phosphoglycerate mutase family. BPG-dependent PGAM subfamily.

The catalysed reaction is (2R)-2-phosphoglycerate = (2R)-3-phosphoglycerate. Its pathway is carbohydrate degradation; glycolysis; pyruvate from D-glyceraldehyde 3-phosphate: step 3/5. Functionally, catalyzes the interconversion of 2-phosphoglycerate and 3-phosphoglycerate. In Chlorobium phaeobacteroides (strain DSM 266 / SMG 266 / 2430), this protein is 2,3-bisphosphoglycerate-dependent phosphoglycerate mutase.